Consider the following 310-residue polypeptide: ADP-L-glycero-D-manno-heptose-6-epimerase (310 aa).

Residues 10–11 (FI), 31–32 (DN), Lys38, Lys53, 75–79 (EGACS), and Asn92 contribute to the NADP(+) site. Catalysis depends on Tyr140, which acts as the Proton acceptor. Residue Lys144 coordinates NADP(+). Substrate is bound at residue Asn169. Positions 170 and 178 each coordinate NADP(+). The active-site Proton acceptor is Lys178. Substrate-binding positions include Ser180, His187, 201–204 (FEGS), Arg209, and Tyr272.

It belongs to the NAD(P)-dependent epimerase/dehydratase family. HldD subfamily. In terms of assembly, homopentamer. Requires NADP(+) as cofactor.

The enzyme catalyses ADP-D-glycero-beta-D-manno-heptose = ADP-L-glycero-beta-D-manno-heptose. It functions in the pathway nucleotide-sugar biosynthesis; ADP-L-glycero-beta-D-manno-heptose biosynthesis; ADP-L-glycero-beta-D-manno-heptose from D-glycero-beta-D-manno-heptose 7-phosphate: step 4/4. Functionally, catalyzes the interconversion between ADP-D-glycero-beta-D-manno-heptose and ADP-L-glycero-beta-D-manno-heptose via an epimerization at carbon 6 of the heptose. The sequence is that of ADP-L-glycero-D-manno-heptose-6-epimerase from Klebsiella pneumoniae (strain 342).